Here is a 269-residue protein sequence, read N- to C-terminus: 5'-nucleotidase SurE (269 aa).

A divalent metal cation contacts are provided by aspartate 8, aspartate 9, serine 40, and asparagine 95.

It belongs to the SurE nucleotidase family. Requires a divalent metal cation as cofactor.

The protein resides in the cytoplasm. The enzyme catalyses a ribonucleoside 5'-phosphate + H2O = a ribonucleoside + phosphate. In terms of biological role, nucleotidase that shows phosphatase activity on nucleoside 5'-monophosphates. This is 5'-nucleotidase SurE from Nitratidesulfovibrio vulgaris (strain DSM 19637 / Miyazaki F) (Desulfovibrio vulgaris).